A 735-amino-acid polypeptide reads, in one-letter code: DNA replication licensing factor mcm5-A (735 aa).

Positions 332-538 (IYETVAKSIA…RDMTLAKHVM (207 aa)) constitute an MCM domain. Arg372 is a binding site for ADP. The Arginine finger motif lies at 513–516 (SRFD).

It belongs to the MCM family. In terms of assembly, component of the mcm2-7 complex (RLF-M). The complex forms a toroidal hexameric ring with the proposed subunit order mcm2-mcm6-mcm4-mcm7-mcm3-mcm5. The heterodimer of mmcm3/mcm5 interacts with mcm4, mmcm6, mcm7 and weakly with mcm2. Component of the CMG helicase complex, composed of the mcm2-7 complex, the GINS complex and cdc45.

It localises to the nucleus. The protein localises to the chromosome. It carries out the reaction ATP + H2O = ADP + phosphate + H(+). Acts as a component of the MCM2-7 complex (MCM complex) which is the replicative helicase essential for 'once per cell cycle' DNA replication initiation and elongation in eukaryotic cells. Core component of CDC45-MCM-GINS (CMG) helicase, the molecular machine that unwinds template DNA during replication, and around which the replisome is built. The active ATPase sites in the MCM2-7 ring are formed through the interaction surfaces of two neighboring subunits such that a critical structure of a conserved arginine finger motif is provided in trans relative to the ATP-binding site of the Walker A box of the adjacent subunit. The six ATPase active sites, however, are likely to contribute differentially to the complex helicase activity. This chain is DNA replication licensing factor mcm5-A (mcm5-a), found in Xenopus laevis (African clawed frog).